We begin with the raw amino-acid sequence, 1748 residues long: Anaphase-promoting complex subunit 1 (1748 aa).

Disordered regions lie at residues Met-1–Asp-24 and Val-1435–Ala-1479. Polar residues predominate over residues Val-1435–Asn-1450. A compositionally biased stretch (basic and acidic residues) spans Ser-1451–Ser-1468. Ser-1462 carries the post-translational modification Phosphoserine.

The protein belongs to the APC1 family. As to quaternary structure, the APC/C is composed of at least 13 subunits that stay tightly associated throughout the cell cycle: APC1, APC2, APC4, APC5, APC9, APC11, CDC16, CDC23, CDC26, CDC27, DOC1, MND2 and SWM1. APC1 interacts directly with MND2.

It is found in the nucleus. The protein resides in the cytoplasm. It localises to the cytoskeleton. Its subcellular location is the spindle pole. Its pathway is protein modification; protein ubiquitination. Component of the anaphase promoting complex/cyclosome (APC/C), a cell cycle-regulated E3 ubiquitin-protein ligase complex that controls progression through mitosis and the G1 phase of the cell cycle. The APC/C is thought to confer substrate specificity and, in the presence of ubiquitin-conjugating E2 enzymes, it catalyzes the formation of protein-ubiquitin conjugates that are subsequently degraded by the 26S proteasome. In early mitosis, the APC/C is activated by CDC20 and targets securin PDS1, the B-type cyclin CLB5, and other anaphase inhibitory proteins for proteolysis, thereby triggering the separation of sister chromatids at the metaphase-to-anaphase transition. In late mitosis and in G1, degradation of CLB5 allows activation of the APC/C by CDH1, which is needed to destroy CDC20 and the B-type cyclin CLB2 to allow exit from mitosis and creating the low CDK state necessary for cytokinesis and for reforming prereplicative complexes in G1 prior to another round of replication. The protein is Anaphase-promoting complex subunit 1 (APC1) of Saccharomyces cerevisiae (strain ATCC 204508 / S288c) (Baker's yeast).